We begin with the raw amino-acid sequence, 171 residues long: MEILNELISTYKDHPKEGIDFKDVLEIVQHPIVFKELILKMASSKIVSNAEALISIDARGFIFGSAISFQVSKPMIFARKPGKLPGELIKKKYTLEYGENSLSIQKKSLNNFYSFAIIDDLLATGGTVNCVSNILKDNGKKITGLLTVVELIELEGRSKFDFPVESWLKCK.

This sequence belongs to the purine/pyrimidine phosphoribosyltransferase family. Homodimer.

It is found in the cytoplasm. It catalyses the reaction AMP + diphosphate = 5-phospho-alpha-D-ribose 1-diphosphate + adenine. Its pathway is purine metabolism; AMP biosynthesis via salvage pathway; AMP from adenine: step 1/1. Catalyzes a salvage reaction resulting in the formation of AMP, that is energically less costly than de novo synthesis. This chain is Adenine phosphoribosyltransferase (apt), found in Prochlorococcus marinus subsp. pastoris (strain CCMP1986 / NIES-2087 / MED4).